A 677-amino-acid polypeptide reads, in one-letter code: UvrABC system protein B (677 aa).

Residues 27-192 form the Helicase ATP-binding domain; that stretch reads ANLGQGVRDQ…QRNDFDFHRG (166 aa). 40 to 47 provides a ligand contact to ATP; that stretch reads GVTGSGKT. Positions 93-116 match the Beta-hairpin motif; that stretch reads YYDYYQPEAYVPASDTYIEKDSSI. Residues 432–594 enclose the Helicase C-terminal domain; sequence QVDDLLAECR…IEPRTIRKSL (163 aa). One can recognise a UVR domain in the interval 638-673; that stretch reads AKHIQKLEREMREAAKELEFERAATLRDRIRLLRER.

It belongs to the UvrB family. In terms of assembly, forms a heterotetramer with UvrA during the search for lesions. Interacts with UvrC in an incision complex.

The protein resides in the cytoplasm. Its function is as follows. The UvrABC repair system catalyzes the recognition and processing of DNA lesions. A damage recognition complex composed of 2 UvrA and 2 UvrB subunits scans DNA for abnormalities. Upon binding of the UvrA(2)B(2) complex to a putative damaged site, the DNA wraps around one UvrB monomer. DNA wrap is dependent on ATP binding by UvrB and probably causes local melting of the DNA helix, facilitating insertion of UvrB beta-hairpin between the DNA strands. Then UvrB probes one DNA strand for the presence of a lesion. If a lesion is found the UvrA subunits dissociate and the UvrB-DNA preincision complex is formed. This complex is subsequently bound by UvrC and the second UvrB is released. If no lesion is found, the DNA wraps around the other UvrB subunit that will check the other stand for damage. This is UvrABC system protein B from Nitratidesulfovibrio vulgaris (strain DP4) (Desulfovibrio vulgaris).